A 90-amino-acid chain; its full sequence is Small ribosomal subunit protein bS20 (90 aa).

It belongs to the bacterial ribosomal protein bS20 family.

In terms of biological role, binds directly to 16S ribosomal RNA. The sequence is that of Small ribosomal subunit protein bS20 from Francisella tularensis subsp. tularensis (strain FSC 198).